The following is a 258-amino-acid chain: Global transcriptional regulator CodY (258 aa).

The segment at 1–156 (MSSLLSKTRR…SATIVGMEML (156 aa)) is GAF domain. The H-T-H motif DNA-binding region spans 204–223 (ASKIADKVGITRSVIVNALR).

Belongs to the CodY family.

The protein localises to the cytoplasm. Its function is as follows. DNA-binding global transcriptional regulator which is involved in the adaptive response to starvation and acts by directly or indirectly controlling the expression of numerous genes in response to nutrient availability. During rapid exponential growth, CodY is highly active and represses genes whose products allow adaptation to nutrient depletion. This Clostridium botulinum (strain Eklund 17B / Type B) protein is Global transcriptional regulator CodY.